We begin with the raw amino-acid sequence, 609 residues long: RAS guanyl-releasing protein 2 (609 aa).

Ala-2 is lipidated: N-myristoyl glycine. The N-terminal Ras-GEF domain occupies 4–126 (TLDLDKGCTV…SLIDIDSVPT (123 aa)). Leu-7 is lipidated: S-palmitoyl cysteine. 3 positions are modified to phosphoserine: Ser-116, Ser-117, and Ser-147. Positions 154-387 (EPMELAEHLT…YQLSLQREPR (234 aa)) constitute a Ras-GEF domain. The disordered stretch occupies residues 382 to 406 (LQREPRSKSSPTSPTSCTPPPRPPV). 2 EF-hand domains span residues 426-461 (HIEK…FPYL) and 455-490 (RGNF…SSSV). Positions 439, 441, 443, 445, 450, 468, 470, 472, 474, and 479 each coordinate Ca(2+). The Phorbol-ester/DAG-type zinc-finger motif lies at 498 to 548 (VHNFQESNSLRPVACRHCKALILGIYKQGLKCRACGVNCHKQCKDRLSVEC). Phosphoserine is present on residues Ser-554 and Ser-576. The tract at residues 557-592 (LEGSAPSPSPMHSHHHRAFSFSLPRPGRRGSRPPEI) is disordered.

This sequence belongs to the RASGRP family. As to quaternary structure, forms a signaling complex with RAP1 and BRAF. Interacts with RAP1. Interacts with F-actin. Isoform 2 is palmitoylated and myristoylated. In terms of tissue distribution, detected in platelets, neutrophils and T lymphocytes (at protein level). Expressed in brain where it is enriched in the striatum. Also expressed in the hematopoietic system. Detected in heart, brain, lung, placenta, liver, skeletal muscle and kidney.

The protein localises to the cytoplasm. Its subcellular location is the cytosol. It is found in the cell membrane. The protein resides in the synapse. It localises to the synaptosome. The protein localises to the cell projection. Its subcellular location is the ruffle membrane. Isoform 1 and isoform 2 are differently regulated by calcium and DAG. Its function is as follows. Functions as a calcium- and DAG-regulated nucleotide exchange factor specifically activating Rap through the exchange of bound GDP for GTP. May also activate other GTPases such as RRAS, RRAS2, NRAS, KRAS but not HRAS. Functions in aggregation of platelets and adhesion of T-lymphocytes and neutrophils probably through inside-out integrin activation. May function in the muscarinic acetylcholine receptor M1/CHRM1 signaling pathway. In Homo sapiens (Human), this protein is RAS guanyl-releasing protein 2 (RASGRP2).